The primary structure comprises 398 residues: Acetate kinase (398 aa).

Asparagine 9 serves as a coordination point for Mg(2+). Position 16 (lysine 16) interacts with ATP. Arginine 90 contributes to the substrate binding site. Aspartate 147 functions as the Proton donor/acceptor in the catalytic mechanism. Residues histidine 207–glycine 211, aspartate 282–arginine 284, and glycine 330–asparagine 334 each bind ATP. Glutamate 384 contacts Mg(2+).

Belongs to the acetokinase family. Homodimer. The cofactor is Mg(2+). Mn(2+) serves as cofactor.

It is found in the cytoplasm. It catalyses the reaction acetate + ATP = acetyl phosphate + ADP. The protein operates within metabolic intermediate biosynthesis; acetyl-CoA biosynthesis; acetyl-CoA from acetate: step 1/2. Its function is as follows. Catalyzes the formation of acetyl phosphate from acetate and ATP. Can also catalyze the reverse reaction. The sequence is that of Acetate kinase from Staphylococcus carnosus (strain TM300).